The primary structure comprises 185 residues: Peptide deformylase (185 aa).

Residues Cys-94 and His-136 each contribute to the Fe cation site. Residue Glu-137 is part of the active site. His-140 lines the Fe cation pocket.

This sequence belongs to the polypeptide deformylase family. Requires Fe(2+) as cofactor.

The enzyme catalyses N-terminal N-formyl-L-methionyl-[peptide] + H2O = N-terminal L-methionyl-[peptide] + formate. Functionally, removes the formyl group from the N-terminal Met of newly synthesized proteins. Requires at least a dipeptide for an efficient rate of reaction. N-terminal L-methionine is a prerequisite for activity but the enzyme has broad specificity at other positions. This is Peptide deformylase from Chlorobium phaeobacteroides (strain BS1).